The chain runs to 593 residues: Mono(ADP-ribosyl)transferase SpvB (593 aa).

The segment at 361 to 384 (PVNNMMPPPPPPPPPMMGGNSSRP) is disordered. Residues 366–376 (MPPPPPPPPPM) are compositionally biased toward pro residues. A TR mART core domain is found at 375–578 (PMMGGNSSRP…LRLSDDATAD (204 aa)). Active-site residues include Arg-473, Ser-503, and Glu-540.

This sequence belongs to the SpvB family.

The protein resides in the secreted. The enzyme catalyses L-arginyl-[protein] + NAD(+) = N(omega)-(ADP-D-ribosyl)-L-arginyl-[protein] + nicotinamide + H(+). Mono-ADP-ribosylates muscle and non-muscle actin. ADP-ribosylates Chinese hamster ovary and HeLa cell actin as well as rabbit muscle, porcine heart actin and non-muscle beta- and gamma-actin. ADP-ribosylation of actin prevents the polymerization of G actin to F actin, causing actin filament depolymerization, destruction of the cytoskeleton and cytotoxicity; this requires only the C-terminal 120 residues. Does not possess NAD(+)-glycohydrolase activity, unlike most mART enzymes. In Salmonella dublin, this protein is Mono(ADP-ribosyl)transferase SpvB (spvB).